Here is a 600-residue protein sequence, read N- to C-terminus: Aspartate--tRNA(Asp/Asn) ligase (600 aa).

L-aspartate is bound at residue E187. The aspartate stretch occupies residues Q211–K214. Residues R233 and H463 each coordinate L-aspartate. An ATP-binding site is contributed by R233 to E235. E497 contributes to the ATP binding site. Position 504 (R504) interacts with L-aspartate. ATP is bound at residue G549–R552.

The protein belongs to the class-II aminoacyl-tRNA synthetase family. Type 1 subfamily. As to quaternary structure, homodimer.

It localises to the cytoplasm. The catalysed reaction is tRNA(Asx) + L-aspartate + ATP = L-aspartyl-tRNA(Asx) + AMP + diphosphate. In terms of biological role, aspartyl-tRNA synthetase with relaxed tRNA specificity since it is able to aspartylate not only its cognate tRNA(Asp) but also tRNA(Asn). Reaction proceeds in two steps: L-aspartate is first activated by ATP to form Asp-AMP and then transferred to the acceptor end of tRNA(Asp/Asn). The sequence is that of Aspartate--tRNA(Asp/Asn) ligase from Wolbachia sp. subsp. Drosophila simulans (strain wRi).